A 264-amino-acid polypeptide reads, in one-letter code: Indole-3-glycerol phosphate synthase (264 aa).

The protein belongs to the TrpC family.

It carries out the reaction 1-(2-carboxyphenylamino)-1-deoxy-D-ribulose 5-phosphate + H(+) = (1S,2R)-1-C-(indol-3-yl)glycerol 3-phosphate + CO2 + H2O. It functions in the pathway amino-acid biosynthesis; L-tryptophan biosynthesis; L-tryptophan from chorismate: step 4/5. The protein is Indole-3-glycerol phosphate synthase of Albidiferax ferrireducens (strain ATCC BAA-621 / DSM 15236 / T118) (Rhodoferax ferrireducens).